The primary structure comprises 229 residues: uncharacterized protein (229 aa).

Residues 2–69 (QRLAKLISNA…KSRLWIYYKP (68 aa)) form the S4 RNA-binding domain. D102 serves as the catalytic Nucleophile.

Belongs to the pseudouridine synthase RsuA family.

It catalyses the reaction a uridine in RNA = a pseudouridine in RNA. This is an uncharacterized protein from Rickettsia bellii (strain RML369-C).